The sequence spans 67 residues: Large ribosomal subunit protein bL32c (67 aa).

It belongs to the bacterial ribosomal protein bL32 family.

It is found in the plastid. The protein localises to the chloroplast. The polypeptide is Large ribosomal subunit protein bL32c (Chara vulgaris (Common stonewort)).